The following is a 252-amino-acid chain: uncharacterized protein (252 aa).

The next 6 helical transmembrane spans lie at 5–25, 29–49, 61–81, 141–161, 179–199, and 217–237; these read LTSL…IVSF, LALV…GTFI, IAGI…GLYF, ILPS…PGII, WLLL…SKWW, and IGWI…LIQF.

Belongs to the DedA family.

The protein resides in the cell membrane. This is an uncharacterized protein from Buchnera aphidicola subsp. Schizaphis graminum (strain Sg).